We begin with the raw amino-acid sequence, 187 residues long: ATP-dependent protease subunit HslV (187 aa).

The active site involves threonine 7. The Na(+) site is built by alanine 162, cysteine 165, and threonine 168.

This sequence belongs to the peptidase T1B family. HslV subfamily. As to quaternary structure, a double ring-shaped homohexamer of HslV is capped on each side by a ring-shaped HslU homohexamer. The assembly of the HslU/HslV complex is dependent on binding of ATP.

Its subcellular location is the cytoplasm. It catalyses the reaction ATP-dependent cleavage of peptide bonds with broad specificity.. Allosterically activated by HslU binding. In terms of biological role, protease subunit of a proteasome-like degradation complex believed to be a general protein degrading machinery. This is ATP-dependent protease subunit HslV from Methylococcus capsulatus (strain ATCC 33009 / NCIMB 11132 / Bath).